Consider the following 320-residue polypeptide: AA9 family lytic polysaccharide monooxygenase-like protein CEL1 (320 aa).

A signal peptide spans Met1–Ala29. Disulfide bonds link Cys78–Cys199 and Cys121–Cys126. His109 is a Cu(2+) binding site. The N-linked (GlcNAc...) asparagine glycan is linked to Asn163. 2 residues coordinate O2: His189 and Gln194. Tyr196 is a Cu(2+) binding site. Residues Gly255–Gly284 are disordered. Residues Ser262–Thr274 show a composition bias toward low complexity. One can recognise a CBM1 domain in the interval Gly284 to Leu320.

It belongs to the polysaccharide monooxygenase AA9 family. Cu(2+) is required as a cofactor.

It is found in the secreted. The catalysed reaction is [(1-&gt;4)-beta-D-glucosyl]n+m + reduced acceptor + O2 = 4-dehydro-beta-D-glucosyl-[(1-&gt;4)-beta-D-glucosyl]n-1 + [(1-&gt;4)-beta-D-glucosyl]m + acceptor + H2O.. Functionally, lytic polysaccharide monooxygenase (LPMO)-like protein that binds strongly to cellulose. Seems not to acts as an endoglucanase, a ceUobiohydrolase able to hydrolyze fluorogenic cellobiosides, a /3-glucosidase, a xylanase, nor a cellobiose:quinone oxidoreductase. The polypeptide is AA9 family lytic polysaccharide monooxygenase-like protein CEL1 (Agaricus bisporus (White button mushroom)).